We begin with the raw amino-acid sequence, 259 residues long: Glutamate racemase (259 aa).

Substrate is bound by residues 9-10 (DS) and 41-42 (YG). The active-site Proton donor/acceptor is the Cys-73. 74-75 (NT) contributes to the substrate binding site. The Proton donor/acceptor role is filled by Cys-183. 184-185 (TH) serves as a coordination point for substrate.

Belongs to the aspartate/glutamate racemases family.

The catalysed reaction is L-glutamate = D-glutamate. Its pathway is cell wall biogenesis; peptidoglycan biosynthesis. Provides the (R)-glutamate required for cell wall biosynthesis. The sequence is that of Glutamate racemase from Shewanella frigidimarina (strain NCIMB 400).